We begin with the raw amino-acid sequence, 76 residues long: Large ribosomal subunit protein uL24 (76 aa).

The protein belongs to the universal ribosomal protein uL24 family. In terms of assembly, part of the 50S ribosomal subunit.

One of two assembly initiator proteins, it binds directly to the 5'-end of the 23S rRNA, where it nucleates assembly of the 50S subunit. Functionally, one of the proteins that surrounds the polypeptide exit tunnel on the outside of the subunit. This Campylobacter hominis (strain ATCC BAA-381 / DSM 21671 / CCUG 45161 / LMG 19568 / NCTC 13146 / CH001A) protein is Large ribosomal subunit protein uL24.